Here is a 199-residue protein sequence, read N- to C-terminus: Recombination protein RecR (199 aa).

The segment at 58-73 (CRRCFNLTEGEECDIC) adopts a C4-type zinc-finger fold. The region spanning 81–176 (SVICVVEDPY…RVTALASGLP (96 aa)) is the Toprim domain.

Belongs to the RecR family.

Functionally, may play a role in DNA repair. It seems to be involved in an RecBC-independent recombinational process of DNA repair. It may act with RecF and RecO. The protein is Recombination protein RecR of Rubrobacter xylanophilus (strain DSM 9941 / JCM 11954 / NBRC 16129 / PRD-1).